A 508-amino-acid polypeptide reads, in one-letter code: MNPGDFKDFAKAMTDYITEYLENIRDRQVVPSVKPGYLRPLVPEQAPQQAEPWTAVMADIERVVMSGVTHWQSPRFHAYFPTANSYPSIVADMLSGAIACIGFTWIASPACTELEVVMLDWLGQMLGLPDQFLARSGGEGGGVIQGTASEATFVALLGAKSRMMHRVKEQHPEWTETDILGKLVGYCNQQAHSSVERAGLLGGVKLRSLKPDSKRRLRGDTLREAIDEDIRNGLIPFYVVATLGTTSSCAFDALDEIGDVCNASDIWLHVDAAYAGSAFICPEYRHFMKGVEKADSFNFNPHKWMLVNFDCSAMWLKQPRWIVDAFNVDPLYLKHEQQGSAPDYRHWQIPLGRRFRSLKLWFVLRLYGVENLQKYIRKQIGFAHLFERLLTSDERFELFEEVTMGLVCFRLKGSNEINEELLRRINGRGKIHLVPSKVDDVYFLRLAICSRFTEESDMHVSWEEIKDRLMMFLKSKGAVLIKIICSTTRRTKNILTYIKQNIFRDVGL.

Substrate is bound at residue T82. Residues A148 and S149 each contribute to the pyridoxal 5'-phosphate site. H192 contributes to the substrate binding site. 2 residues coordinate pyridoxal 5'-phosphate: T246 and N300. N6-(pyridoxal phosphate)lysine is present on K303.

It belongs to the group II decarboxylase family. As to quaternary structure, homodimer. Pyridoxal 5'-phosphate serves as cofactor.

The enzyme catalyses L-dopa + H(+) = dopamine + CO2. It catalyses the reaction 5-hydroxy-L-tryptophan + H(+) = serotonin + CO2. Functionally, catalyzes the decarboxylation of L-3,4-dihydroxyphenylalanine (DOPA) to dopamine, L-5-hydroxytryptophan to serotonin and L-tryptophan to tryptamine. This chain is Aromatic-L-amino-acid decarboxylase (Ddc), found in Manduca sexta (Tobacco hawkmoth).